The following is a 31-amino-acid chain: Cytochrome b6-f complex subunit 6 (31 aa).

A helical membrane pass occupies residues 3–23 (ILISYFCFLLVFFLFTLILFI).

This sequence belongs to the PetL family. In terms of assembly, the 4 large subunits of the cytochrome b6-f complex are cytochrome b6, subunit IV (17 kDa polypeptide, PetD), cytochrome f and the Rieske protein, while the 4 small subunits are PetG, PetL, PetM and PetN. The complex functions as a dimer.

The protein resides in the plastid. It localises to the chloroplast thylakoid membrane. Component of the cytochrome b6-f complex, which mediates electron transfer between photosystem II (PSII) and photosystem I (PSI), cyclic electron flow around PSI, and state transitions. PetL is important for photoautotrophic growth as well as for electron transfer efficiency and stability of the cytochrome b6-f complex. The sequence is that of Cytochrome b6-f complex subunit 6 from Welwitschia mirabilis (Tree tumbo).